We begin with the raw amino-acid sequence, 651 residues long: Receptor-like serine/threonine-protein kinase At4g25390 (651 aa).

Positions 1-25 (MPSRSISAPVPVLAPAPIVSSLVPA) are cleaved as a signal peptide. Residues 26-40 (APSGHQNKTTRIFPP) lie on the Extracellular side of the membrane. An N-linked (GlcNAc...) asparagine glycan is attached at N32. The chain crosses the membrane as a helical span at residues 41-61 (FVVAGAGAGFSLFITLSVCFC). The Cytoplasmic portion of the chain corresponds to 62 to 651 (KFSRKRSSPP…PLKTTRKQRR (590 aa)). The interval 66–87 (KRSSPPAENASSSPRRPSPREF) is disordered. Low complexity predominate over residues 69–87 (SPPAENASSSPRRPSPREF). In terms of domain architecture, Protein kinase spans 99 to 633 (FSQANRLGQG…LKGEVNLPEL (535 aa)). ATP contacts are provided by residues 105-113 (LGQGGFGVV) and K127. D225 (proton acceptor) is an active-site residue.

This sequence belongs to the protein kinase superfamily. Ser/Thr protein kinase family.

It localises to the cell membrane. It catalyses the reaction L-seryl-[protein] + ATP = O-phospho-L-seryl-[protein] + ADP + H(+). It carries out the reaction L-threonyl-[protein] + ATP = O-phospho-L-threonyl-[protein] + ADP + H(+). This Arabidopsis thaliana (Mouse-ear cress) protein is Receptor-like serine/threonine-protein kinase At4g25390.